Here is a 772-residue protein sequence, read N- to C-terminus: Subtilisin-like protease SBT5.3 (772 aa).

A signal peptide spans 1-25 (MKLTHNFSFLLLLLLVHMSSKHILA). The region spanning 31–116 (SYVVYFGAHS…VFPNKALKLH (86 aa)) is the Inhibitor I9 domain. In terms of domain architecture, Peptidase S8 spans 120 to 628 (SWDFLGLEHN…AGHVQPNLAV (509 aa)). Catalysis depends on Asp153, which acts as the Charge relay system. Asn211 carries an N-linked (GlcNAc...) asparagine glycan. Catalysis depends on His223, which acts as the Charge relay system. 3 N-linked (GlcNAc...) asparagine glycosylation sites follow: Asn246, Asn306, and Asn396. Residues 398 to 480 (SALDAQLCKL…KDSFAVSRYI (83 aa)) form the PA domain. The active-site Charge relay system is Ser561. Residues Asn606, Asn651, Asn662, Asn684, and Asn725 are each glycosylated (N-linked (GlcNAc...) asparagine).

The protein belongs to the peptidase S8 family. As to expression, expressed specifically at sites of lateral root emergence.

It is found in the secreted. Its subcellular location is the cell wall. Functionally, serine protease. Has a substrate preference for the hydrophobic residues Phe and Ala and the basic residue Asp in the P1 position, and for Asp, Leu or Ala in the P1' position. May play a role in the degradation of structural proteins in the extracellular matrix of cells located above sites of lateral root formation and thus facilitate lateral root emergence. The polypeptide is Subtilisin-like protease SBT5.3 (AIR3) (Arabidopsis thaliana (Mouse-ear cress)).